Reading from the N-terminus, the 82-residue chain is ATP synthase subunit c (82 aa).

2 consecutive transmembrane segments (helical) span residues 7–27 and 53–73; these read FVAL…CIGI and FLLA…AMMF.

Belongs to the ATPase C chain family. F-type ATPases have 2 components, F(1) - the catalytic core - and F(0) - the membrane proton channel. F(1) has five subunits: alpha(3), beta(3), gamma(1), delta(1), epsilon(1). F(0) has three main subunits: a(1), b(2) and c(10-14). The alpha and beta chains form an alternating ring which encloses part of the gamma chain. F(1) is attached to F(0) by a central stalk formed by the gamma and epsilon chains, while a peripheral stalk is formed by the delta and b chains.

The protein resides in the cell inner membrane. In terms of biological role, f(1)F(0) ATP synthase produces ATP from ADP in the presence of a proton or sodium gradient. F-type ATPases consist of two structural domains, F(1) containing the extramembraneous catalytic core and F(0) containing the membrane proton channel, linked together by a central stalk and a peripheral stalk. During catalysis, ATP synthesis in the catalytic domain of F(1) is coupled via a rotary mechanism of the central stalk subunits to proton translocation. Functionally, key component of the F(0) channel; it plays a direct role in translocation across the membrane. A homomeric c-ring of between 10-14 subunits forms the central stalk rotor element with the F(1) delta and epsilon subunits. This chain is ATP synthase subunit c, found in Aromatoleum aromaticum (strain DSM 19018 / LMG 30748 / EbN1) (Azoarcus sp. (strain EbN1)).